We begin with the raw amino-acid sequence, 334 residues long: MLTYAQAGVDDEKTVRALKNIIGLARETFKFRRGKPGEPAENLGHYSALLDFGNFYLAMTTDGVGTKVLVAEAVGKFNTIGIDMIAMNVNDLLCVGAEPIALVDYLAVREPDEKIFAEIAKGLYAGAEKAGIAIVGGETAVMPDLINGFDLAGTAIGIVEKGKVITGEEMRPDDAVIGISSSGIHSNGLTLARKLLIPKYGLDYEYEGRKLWEWLLEPTRIYVRAVLELLERVEVHGLAHITGGGLINLKRLTNYGFSLEMPPIEGIFKLIHENGVPLEEMFRVFNMGVGFVAIVPPEEKEEALGILNKYYESFELGRVTKEPGIRVENYGIKL.

This sequence belongs to the AIR synthase family.

It localises to the cytoplasm. It catalyses the reaction 2-formamido-N(1)-(5-O-phospho-beta-D-ribosyl)acetamidine + ATP = 5-amino-1-(5-phospho-beta-D-ribosyl)imidazole + ADP + phosphate + H(+). Its pathway is purine metabolism; IMP biosynthesis via de novo pathway; 5-amino-1-(5-phospho-D-ribosyl)imidazole from N(2)-formyl-N(1)-(5-phospho-D-ribosyl)glycinamide: step 2/2. The polypeptide is Phosphoribosylformylglycinamidine cyclo-ligase (Thermococcus gammatolerans (strain DSM 15229 / JCM 11827 / EJ3)).